The primary structure comprises 781 residues: Translation initiation factor IF-2 (781 aa).

Residues 44-195 (RQLDNAVDGT…TPPKPKELPE (152 aa)) form a disordered region. Basic and acidic residues predominate over residues 53 to 65 (TNKKAEAPKKETT). Over residues 66 to 81 (SNENGNSKGPNKPNMT) the composition is skewed to polar residues. A compositionally biased stretch (low complexity) spans 82 to 93 (NSNEKSNKPNKP). Positions 115-126 (KPANTGNQTQAS) are enriched in polar residues. The span at 127–169 (GNQQAGGQKRNNNNNSNRPGGGNPNRPGGNNRPNRGGNFNNKG) shows a compositional bias: low complexity. In terms of domain architecture, tr-type G spans 282–451 (ERPPVVTIMG…LLVSEVEELK (170 aa)). Residues 291–298 (GHVDHGKT) are G1. Residue 291 to 298 (GHVDHGKT) participates in GTP binding. A G2 region spans residues 316 to 320 (GITQH). Residues 337–340 (DTPG) are G3. GTP is bound by residues 337-341 (DTPGH) and 391-394 (NKID). Residues 391–394 (NKID) form a G4 region. The tract at residues 427–429 (SAK) is G5.

The protein belongs to the TRAFAC class translation factor GTPase superfamily. Classic translation factor GTPase family. IF-2 subfamily.

The protein resides in the cytoplasm. Functionally, one of the essential components for the initiation of protein synthesis. Protects formylmethionyl-tRNA from spontaneous hydrolysis and promotes its binding to the 30S ribosomal subunits. Also involved in the hydrolysis of GTP during the formation of the 70S ribosomal complex. The chain is Translation initiation factor IF-2 from Listeria monocytogenes serotype 4a (strain HCC23).